A 552-amino-acid chain; its full sequence is CTP synthase (552 aa).

Positions 1–270 (MTKYVFVTGG…DRIICEELKL (270 aa)) are amidoligase domain. CTP is bound at residue S13. S13 serves as a coordination point for UTP. ATP contacts are provided by residues 14–19 (SLGKGI) and D71. Positions 71 and 144 each coordinate Mg(2+). CTP contacts are provided by residues 151–153 (DIE), 191–196 (KTKPTQ), and K227. UTP is bound by residues 191–196 (KTKPTQ) and K227. A Glutamine amidotransferase type-1 domain is found at 295-547 (TIGMVGKYVD…VEAALANKQA (253 aa)). Residue G356 participates in L-glutamine binding. Residue C383 is the Nucleophile; for glutamine hydrolysis of the active site. L-glutamine contacts are provided by residues 384–387 (LGMQ), E407, and R473. Residues H520 and E522 contribute to the active site.

The protein belongs to the CTP synthase family. Homotetramer.

It carries out the reaction UTP + L-glutamine + ATP + H2O = CTP + L-glutamate + ADP + phosphate + 2 H(+). The catalysed reaction is L-glutamine + H2O = L-glutamate + NH4(+). It catalyses the reaction UTP + NH4(+) + ATP = CTP + ADP + phosphate + 2 H(+). It participates in pyrimidine metabolism; CTP biosynthesis via de novo pathway; CTP from UDP: step 2/2. With respect to regulation, allosterically activated by GTP, when glutamine is the substrate; GTP has no effect on the reaction when ammonia is the substrate. The allosteric effector GTP functions by stabilizing the protein conformation that binds the tetrahedral intermediate(s) formed during glutamine hydrolysis. Inhibited by the product CTP, via allosteric rather than competitive inhibition. In terms of biological role, catalyzes the ATP-dependent amination of UTP to CTP with either L-glutamine or ammonia as the source of nitrogen. Regulates intracellular CTP levels through interactions with the four ribonucleotide triphosphates. The sequence is that of CTP synthase from Burkholderia cenocepacia (strain HI2424).